Here is a 55-residue protein sequence, read N- to C-terminus: MFGELGVPEVLFILGIALLIFGPKKLGDLGKGLGEGVRGFKSALRDEPKKEETKA.

The chain crosses the membrane as a helical span at residues 1–21; that stretch reads MFGELGVPEVLFILGIALLIF.

Belongs to the TatA/E family. In terms of assembly, forms a complex with TatC.

It is found in the cell inner membrane. Functionally, part of the twin-arginine translocation (Tat) system that transports large folded proteins containing a characteristic twin-arginine motif in their signal peptide across membranes. TatA could form the protein-conducting channel of the Tat system. The chain is Sec-independent protein translocase protein TatA from Koribacter versatilis (strain Ellin345).